Reading from the N-terminus, the 603-residue chain is Probable lysosomal cobalamin transporter (603 aa).

9 consecutive transmembrane segments (helical) span residues 13–33, 50–70, 99–119, 150–170, 201–221, 318–338, 353–373, 381–401, and 422–442; these read IWVAYAVAVALVFFVAVITVF, IVSLTALLATVFLLPVDIALV, IVYYSLYSFDALLCLVVIPFA, IAFIILVIILFLVGFFVPTAA, LLMTLGVLLYVLYTATGLALL, LFGGILLLCLSVILWISMLIT, GYILGHINVFQPVNWVFVKAA, ILMAFLILFLFSSSITGIASV, and ALLIATVMQALIILAINYAVV. N509 carries an N-linked (GlcNAc...) asparagine glycan. Residues 512–532 form a helical membrane-spanning segment; the sequence is VFGAIDFWAQFAFLTVFLLVF. Residue N543 is glycosylated (N-linked (GlcNAc...) asparagine). Residues 578-603 are disordered; the sequence is AKRTVGGHPNGQGYGTSGTNGTASSR. Positions 585 to 595 are enriched in gly residues; it reads HPNGQGYGTSG. A glycan (N-linked (GlcNAc...) asparagine) is linked at N597.

The protein belongs to the LIMR family. LMBRD1 subfamily.

It is found in the lysosome membrane. Its function is as follows. Probable lysosomal cobalamin transporter. Required to export cobalamin from lysosomes allowing its conversion to cofactors. The polypeptide is Probable lysosomal cobalamin transporter (Neurospora crassa (strain ATCC 24698 / 74-OR23-1A / CBS 708.71 / DSM 1257 / FGSC 987)).